Consider the following 1985-residue polypeptide: Treslin (1985 aa).

8 disordered regions span residues 574–609 (AQKA…LKPT), 791–858 (EEKS…QPNK), 894–974 (IQET…SIVE), 999–1033 (RRNS…RPGS), 1072–1156 (VYKT…LWGR), 1184–1243 (VKTP…PSGY), 1849–1875 (HEDS…QSRS), and 1938–1966 (FSDG…SPFR). The span at 823 to 837 (RSAKKRRSTALARHR) shows a compositional bias: basic residues. Residues 964-974 (SESNSNISIVE) show a composition bias toward low complexity. 2 stretches are compositionally biased toward polar residues: residues 999–1026 (RRNS…QLQQ) and 1085–1097 (SKNI…QSGN). Residues 1105-1114 (TPYTPRTPSR) show a composition bias toward low complexity. 2 stretches are compositionally biased toward basic and acidic residues: residues 1144–1156 (KPEE…LWGR) and 1191–1200 (QRLESKDFRT). The span at 1201-1224 (PSRTPTRSNNTTPAKQSMQISNTP) shows a compositional bias: polar residues. The span at 1225 to 1238 (RKSDLKHPQEHESR) shows a compositional bias: basic and acidic residues.

This sequence belongs to the treslin family. In terms of assembly, interacts with topbp1 (via BRCT domains); interaction is cdk2-dependent. Component of the replisome complex. Post-translationally, phosphorylated during interphase. Cdk2 promotes both phosphorylation and formation of a ticrr-topbp1 complex.

Its subcellular location is the nucleus. In terms of biological role, regulator of DNA replication and S/M and G2/M checkpoints. Regulates the triggering of DNA replication initiation via its interaction with topbp1 by participating in cdk2-mediated loading of cdc45l onto replication origins. Required for the transition from pre-replication complex (pre-RC) to pre-initiation complex (pre-IC). Required to prevent mitotic entry after treatment with ionizing radiation. The sequence is that of Treslin (ticrr) from Xenopus laevis (African clawed frog).